The sequence spans 379 residues: uncharacterized protein (379 aa).

Disordered stretches follow at residues 1–37 (MSSI…SGQT), 130–150 (VRYS…LSPE), and 332–379 (NPPI…RGSR).

It belongs to the chlamydial CPn_0499/CT_392/TC_0671 family.

This is an uncharacterized protein from Chlamydia muridarum (strain MoPn / Nigg).